A 157-amino-acid polypeptide reads, in one-letter code: uncharacterized protein (157 aa).

This is an uncharacterized protein from Caenorhabditis elegans.